The sequence spans 334 residues: Small ribosomal subunit protein RACK1z (334 aa).

WD repeat units lie at residues 16-47, 73-103, 115-145, 163-195, 207-237, 248-277, and 296-326; these read GHND…LVWD, GHSH…RLWD, GHDK…KLWN, GHNG…KVWN, GHGG…LLWD, DAGS…KIWD, and NQML…RIYK.

Belongs to the WD repeat G protein beta family. Ribosomal protein RACK1 subfamily. Interacts with RAC1, RAC3, RAC6, RAR1, SGT1 and RBOHB. Homodimer and heterodimer with RACK1B. As to expression, widely expressed.

It localises to the cytoplasm. The protein localises to the cell membrane. Functionally, component of the RACK1 regulatory proteins that functions in innate immunity by interacting with multiple proteins in the RAC1 immune complex. Acts as a positive regulator of reactive oxygen species (ROS) production and is required for resistance against rice blast (M.grisea) infection. The protein is Small ribosomal subunit protein RACK1z (RACK1A) of Oryza sativa subsp. japonica (Rice).